The chain runs to 212 residues: Phosphoribosyl-dephospho-CoA transferase (212 aa).

Residues D139 and D141 contribute to the active site.

It belongs to the MdcG family.

It carries out the reaction apo-[malonate decarboxylase ACP] + 2'-(5''-triphospho-alpha-D-ribosyl)-3'-dephospho-CoA = holo-[malonate decarboxylase ACP] + diphosphate. Functionally, transfers 2'-(5-triphosphoribosyl)-3'-dephosphocoenzyme-A to the apo-[acyl-carrier-protein] of the malonate decarboxylase to yield holo-[acyl-carrier-protein]. The polypeptide is Phosphoribosyl-dephospho-CoA transferase (Azotobacter vinelandii (strain DJ / ATCC BAA-1303)).